A 442-amino-acid polypeptide reads, in one-letter code: Shufflon protein B (442 aa).

The segment at 1 to 361 is constant region; that stretch reads MKKYDRGWAS…TGAILSCQSG (361 aa). The variable region stretch occupies residues 362–442; that stretch reads TWKSSSASIW…SYFMKITCLK (81 aa).

The polypeptide is Shufflon protein B (Escherichia coli).